The primary structure comprises 124 residues: Large ribosomal subunit protein bL12 (124 aa).

Belongs to the bacterial ribosomal protein bL12 family. In terms of assembly, homodimer. Part of the ribosomal stalk of the 50S ribosomal subunit. Forms a multimeric L10(L12)X complex, where L10 forms an elongated spine to which 2 to 4 L12 dimers bind in a sequential fashion. Binds GTP-bound translation factors.

Forms part of the ribosomal stalk which helps the ribosome interact with GTP-bound translation factors. Is thus essential for accurate translation. In Herminiimonas arsenicoxydans, this protein is Large ribosomal subunit protein bL12.